Reading from the N-terminus, the 163-residue chain is Putative pre-16S rRNA nuclease (163 aa).

It belongs to the YqgF nuclease family.

It is found in the cytoplasm. Could be a nuclease involved in processing of the 5'-end of pre-16S rRNA. This chain is Putative pre-16S rRNA nuclease, found in Rhodopseudomonas palustris (strain BisA53).